The following is a 490-amino-acid chain: Cysteine--tRNA ligase (490 aa).

Zn(2+) is bound at residue Cys31. The 'HIGH' region motif lies at 33–43 (PTVYGDAHLGH). Cys226, His251, and Glu255 together coordinate Zn(2+). The 'KMSKS' region signature appears at 283–287 (KMGKS). Position 286 (Lys286) interacts with ATP.

It belongs to the class-I aminoacyl-tRNA synthetase family. As to quaternary structure, monomer. The cofactor is Zn(2+).

It is found in the cytoplasm. It carries out the reaction tRNA(Cys) + L-cysteine + ATP = L-cysteinyl-tRNA(Cys) + AMP + diphosphate. This chain is Cysteine--tRNA ligase, found in Porphyromonas gingivalis (strain ATCC BAA-308 / W83).